The primary structure comprises 349 residues: Protein AMBP (349 aa).

The N-terminal stretch at 1–19 (MLGLGTLFLLLAACPASRA) is a signal peptide. N-linked (GlcNAc...) asparagine glycosylation occurs at asparagine 35. 2 residues coordinate 3-hydroxy-L-kynurenine: cysteine 52 and lysine 110. Cysteine 90 and cysteine 187 are disulfide-bonded. Asparagine 114 carries N-linked (GlcNAc...) asparagine glycosylation. 3-hydroxy-L-kynurenine contacts are provided by lysine 136 and lysine 148. The O-linked (Xyl...) (chondroitin sulfate) serine glycan is linked to serine 214. 6 disulfides stabilise this stretch: cysteine 230–cysteine 280, cysteine 239–cysteine 263, cysteine 255–cysteine 276, cysteine 286–cysteine 336, cysteine 295–cysteine 319, and cysteine 311–cysteine 332. BPTI/Kunitz inhibitor domains lie at 230-280 (CQLS…LQTC) and 286-336 (CSLP…KEYC).

This sequence in the N-terminal section; belongs to the calycin superfamily. Lipocalin family. As to quaternary structure, monomer. Homodimer. In plasma, it occurs as a monomer or dimer and in covalently-linked complexes with immunoglobulin A (IgA), ALB/albumin and F2/prothrombin. Chromophore-bound alpha-1-microglobulin interacts with the constant region of immunoglobulin A. Chromophore-bound alpha-1-microglobulin interacts with ALB with molar ratio 2:1 and 1:1; this interaction does not prevent fatty acid binding to ALB. Interacts with F2/prothrombin (via N-terminus) with molar ratio 2:1 and 1:1; this interaction does not prevent the activation of prothrombin to thrombin. Interacts with NDUFAB1, a subunit of mitochondrial complex I. Interacts with FN1. I-alpha-I plasma protease inhibitors are assembled from one or two heavy chains (HC) and one light chain, bikunin. Inter-alpha-inhibitor (I-alpha-I) is composed of ITIH1/HC1, ITIH2/HC2 and bikunin, and pre-alpha-inhibitor (P-alpha-I) of ITIH3/HC3 and bikunin. Interacts with TNFAIP6 (via Link domain). In terms of assembly, monomer. Also occurs as a complex with tryptase in mast cells. The precursor is proteolytically processed into separately functioning proteins. Post-translationally, 3-hydroxykynurenine, an oxidized tryptophan metabolite that is common in biological fluids, reacts with Cys-53, Lys-111, Lys-137, and Lys-149 to form heterogeneous polycyclic chromophores including hydroxanthommatin. The reaction by alpha-1-microglobulin is autocatalytic; the human protein forms chromophore even when expressed in insect and bacterial cells. The chromophore can react with accessible cysteines forming non-reducible thioether cross-links with other molecules of alpha-1-microglobulin or with other proteins such as Ig alpha-1 chain C region 'Cys-352'. In terms of processing, heavy chains are interlinked with bikunin via a chondroitin 4-sulfate bridge to the C-terminal aspartate. Proteolytically cleaved by PRSS3 at Kunitz domain 2. In terms of tissue distribution, expressed by the liver and secreted in plasma.

It localises to the secreted. The protein resides in the endoplasmic reticulum. It is found in the cytoplasm. Its subcellular location is the cytosol. The protein localises to the cell membrane. It localises to the nucleus membrane. The protein resides in the mitochondrion inner membrane. It is found in the extracellular space. Its subcellular location is the extracellular matrix. Its function is as follows. Antioxidant and tissue repair protein with reductase, heme-binding and radical-scavenging activities. Removes and protects against harmful oxidants and repairs macromolecules in intravascular and extravascular spaces and in intracellular compartments. Intravascularly, plays a regulatory role in red cell homeostasis by preventing heme- and reactive oxygen species-induced cell damage. Binds and degrades free heme to protect fetal and adult red blood cells from hemolysis. Reduces extracellular methemoglobin, a Fe3+ (ferric) form of hemoglobin that cannot bind oxygen, back to the Fe2+ (ferrous) form deoxyhemoglobin, which has oxygen-carrying potential. Upon acute inflammation, inhibits oxidation of low-density lipoprotein particles by MPO and limits vascular damage. Extravascularly, protects from oxidation products formed on extracellular matrix structures and cell membranes. Catalyzes the reduction of carbonyl groups on oxidized collagen fibers and preserves cellular and extracellular matrix ultrastructures. Importantly, counteracts the oxidative damage at blood-placenta interface, preventing leakage of free fetal hemoglobin into the maternal circulation. Intracellularly, has a role in maintaining mitochondrial redox homeostasis. Bound to complex I of the respiratory chain of mitochondria, may scavenge free radicals and preserve mitochondrial ATP synthesis. Protects renal tubule epithelial cells from heme-induced oxidative damage to mitochondria. Reduces cytochrome c from Fe3+ (ferric) to the Fe2+ (ferrous) state through formation of superoxide anion radicals in the presence of ascorbate or NADH/NADPH electron donor cofactors, ascorbate being the preferred cofactor. Has a chaperone role in facilitating the correct folding of bikunin in the endoplasmic reticulum compartment. In terms of biological role, kunitz-type serine protease inhibitor and structural component of extracellular matrix with a role in extracellular space remodeling and cell adhesion. Among others, has antiprotease activity toward kallikrein, a protease involved in airway inflammation; inhibits GZMK/granzyme, a granule-stored serine protease involved in NK and T cell cytotoxic responses; and inhibits PLG/plasmin, a protease required for activation of matrix metalloproteinases. As part of I-alpha-I complex, provides for the heavy chains to be transferred from I-alpha-I complex to hyaluronan in the presence of TNFAIP6, in a dynamic process that releases free bikunin and remodels extracellular matrix proteoglycan structures. Free bikunin, but not its heavy chain-bound form, acts as a potent protease inhibitor in airway secretions. Part of hyaluronan-rich extracellular matrix that surrounds oocyte during cumulus oophorus expansion, an indispensable process for proper ovulation. Also inhibits calcium oxalate crystallization. Kunitz-type serine protease inhibitor. Has high catalytic efficiency for F10/blood coagulation factor Xa and may act as an anticoagulant by inhibiting prothrombin activation. Inhibits trypsin and mast cell CMA1/chymase and tryptase proteases. In Mesocricetus auratus (Golden hamster), this protein is Protein AMBP (AMBP).